The sequence spans 159 residues: Protein-export protein SecB (159 aa).

Belongs to the SecB family. In terms of assembly, homotetramer, a dimer of dimers. One homotetramer interacts with 1 SecA dimer.

Its subcellular location is the cytoplasm. Its function is as follows. One of the proteins required for the normal export of preproteins out of the cell cytoplasm. It is a molecular chaperone that binds to a subset of precursor proteins, maintaining them in a translocation-competent state. It also specifically binds to its receptor SecA. The sequence is that of Protein-export protein SecB from Aromatoleum aromaticum (strain DSM 19018 / LMG 30748 / EbN1) (Azoarcus sp. (strain EbN1)).